The chain runs to 328 residues: Cytochrome c biogenesis protein CcsA (328 aa).

The next 8 membrane-spanning stretches (helical) occupy residues 12-32, 45-65, 72-92, 100-120, 145-165, 234-254, 263-283, and 296-316; these read HISF…LLLG, GMII…IFSG, LYES…VLCL, FNTI…SGLL, MILG…ILVI, TISL…VWAN, WDPK…YLHI, and IVAS…NLLG.

It belongs to the CcmF/CycK/Ccl1/NrfE/CcsA family. As to quaternary structure, may interact with Ccs1.

It is found in the plastid. Its subcellular location is the chloroplast thylakoid membrane. In terms of biological role, required during biogenesis of c-type cytochromes (cytochrome c6 and cytochrome f) at the step of heme attachment. This is Cytochrome c biogenesis protein CcsA from Phaseolus vulgaris (Kidney bean).